A 388-amino-acid chain; its full sequence is Zinc finger C2H2 protein ECU10_0150 (388 aa).

A C2H2-type zinc finger spans residues 299–322 (YKCGFCGKAFESEKFIFNHFNNKH).

The sequence is that of Zinc finger C2H2 protein ECU10_0150 from Encephalitozoon cuniculi (strain GB-M1) (Microsporidian parasite).